The sequence spans 218 residues: Phosphoglycolate phosphatase (218 aa).

The active-site Nucleophile is D7. Mg(2+) is bound by residues D7, D9, and D167.

It belongs to the HAD-like hydrolase superfamily. CbbY/CbbZ/Gph/YieH family. Requires Mg(2+) as cofactor.

It catalyses the reaction 2-phosphoglycolate + H2O = glycolate + phosphate. The protein operates within organic acid metabolism; glycolate biosynthesis; glycolate from 2-phosphoglycolate: step 1/1. Functionally, specifically catalyzes the dephosphorylation of 2-phosphoglycolate. Is involved in the dissimilation of the intracellular 2-phosphoglycolate formed during the DNA repair of 3'-phosphoglycolate ends, a major class of DNA lesions induced by oxidative stress. This Cereibacter sphaeroides (strain ATCC 17029 / ATH 2.4.9) (Rhodobacter sphaeroides) protein is Phosphoglycolate phosphatase.